A 748-amino-acid chain; its full sequence is EF-hand domain-containing family member C2 (748 aa).

DM10 domains follow at residues 75 to 182 (DKQV…VKMG), 226 to 366 (DRQV…RSKY), and 428 to 535 (VSNV…EQHA). EF-hand domains are found at residues 556–591 (EQQK…LDVE) and 631–666 (EKFS…FRLP).

Its subcellular location is the cytoplasm. It localises to the cytoskeleton. The protein localises to the cilium axoneme. Microtubule inner protein (MIP) part of the dynein-decorated doublet microtubules (DMTs) in cilia axoneme, which is required for motile cilia beating. The polypeptide is EF-hand domain-containing family member C2 (efhc2) (Danio rerio (Zebrafish)).